Consider the following 334-residue polypeptide: Aspartate carbamoyltransferase catalytic subunit (334 aa).

Residues Arg71 and Thr72 each coordinate carbamoyl phosphate. Lys99 serves as a coordination point for L-aspartate. Positions 121, 151, and 154 each coordinate carbamoyl phosphate. L-aspartate-binding residues include Arg184 and Arg239. 2 residues coordinate carbamoyl phosphate: Gly280 and Pro281.

Belongs to the aspartate/ornithine carbamoyltransferase superfamily. ATCase family. As to quaternary structure, heterododecamer (2C3:3R2) of six catalytic PyrB chains organized as two trimers (C3), and six regulatory PyrI chains organized as three dimers (R2).

The enzyme catalyses carbamoyl phosphate + L-aspartate = N-carbamoyl-L-aspartate + phosphate + H(+). It functions in the pathway pyrimidine metabolism; UMP biosynthesis via de novo pathway; (S)-dihydroorotate from bicarbonate: step 2/3. Catalyzes the condensation of carbamoyl phosphate and aspartate to form carbamoyl aspartate and inorganic phosphate, the committed step in the de novo pyrimidine nucleotide biosynthesis pathway. In Pseudomonas savastanoi pv. phaseolicola (strain 1448A / Race 6) (Pseudomonas syringae pv. phaseolicola (strain 1448A / Race 6)), this protein is Aspartate carbamoyltransferase catalytic subunit.